Here is a 75-residue protein sequence, read N- to C-terminus: Tautomerase PptA (75 aa).

P2 acts as the Proton acceptor; via imino nitrogen in catalysis.

Belongs to the 4-oxalocrotonate tautomerase family. PptA subfamily. Homodimer.

The protein resides in the cytoplasm. The sequence is that of Tautomerase PptA from Klebsiella pneumoniae (strain 342).